The sequence spans 208 residues: Putative 3-methyladenine DNA glycosylase (208 aa).

Belongs to the DNA glycosylase MPG family.

The sequence is that of Putative 3-methyladenine DNA glycosylase from Prosthecochloris aestuarii (strain DSM 271 / SK 413).